A 208-amino-acid chain; its full sequence is Large ribosomal subunit protein uL4 (208 aa).

Residues 45 to 96 form a disordered region; it reads RQGTHKSKTRAEVRGGGRKPYRQKGTGNARQGSTRSPLMVGGGTIFGPTPHG. Residues 69–80 are compositionally biased toward polar residues; it reads GTGNARQGSTRS.

This sequence belongs to the universal ribosomal protein uL4 family. Part of the 50S ribosomal subunit.

Functionally, one of the primary rRNA binding proteins, this protein initially binds near the 5'-end of the 23S rRNA. It is important during the early stages of 50S assembly. It makes multiple contacts with different domains of the 23S rRNA in the assembled 50S subunit and ribosome. Its function is as follows. Forms part of the polypeptide exit tunnel. The polypeptide is Large ribosomal subunit protein uL4 (Chlorobium phaeovibrioides (strain DSM 265 / 1930) (Prosthecochloris vibrioformis (strain DSM 265))).